The sequence spans 429 residues: Glutamate-1-semialdehyde 2,1-aminomutase 1 (429 aa).

Lys268 is modified (N6-(pyridoxal phosphate)lysine).

Belongs to the class-III pyridoxal-phosphate-dependent aminotransferase family. HemL subfamily. Homodimer. Pyridoxal 5'-phosphate serves as cofactor.

Its subcellular location is the cytoplasm. The catalysed reaction is (S)-4-amino-5-oxopentanoate = 5-aminolevulinate. The protein operates within porphyrin-containing compound metabolism; protoporphyrin-IX biosynthesis; 5-aminolevulinate from L-glutamyl-tRNA(Glu): step 2/2. This chain is Glutamate-1-semialdehyde 2,1-aminomutase 1, found in Listeria monocytogenes serotype 4b (strain F2365).